The chain runs to 290 residues: Nucleoid occlusion protein (290 aa).

Residues 153-172 constitute a DNA-binding region (H-T-H motif); that stretch reads EALAQRLGKGQSTIANKLRL.

It belongs to the ParB family.

It is found in the cytoplasm. It localises to the nucleoid. Functionally, effects nucleoid occlusion by binding relatively nonspecifically to DNA and preventing the assembly of the division machinery in the vicinity of the nucleoid, especially under conditions that disturb the cell cycle. It helps to coordinate cell division and chromosome segregation by preventing the formation of the Z ring through the nucleoid, which would cause chromosome breakage. The sequence is that of Nucleoid occlusion protein from Bacillus cereus (strain ATCC 10987 / NRS 248).